A 608-amino-acid chain; its full sequence is MNKEEMNARQKKIRNFSIIAHIDHGKSTLADRILEQTGALTHREMKNQLLDSMDLERERGITIKLNAVQLKYKAKDGETYIFHLIDTPGHVDFTYEVSRSLAACEGAILVVDAAQGIEAQTLANVYLALDNDLEILPVINKIDLPAADPERVRAEIEDVIGLDASDTVLASAKSGIGIEDILEQIVEKVPEPSGDVDKPLKALIFDSVFDAYRGVIANIRIMDGVVKAGDRIKMMSNGKEFEVTEVGVFSPKATPRDELLVGDVGYLTAAIKNVGDTRVGDTITLANNPAEEALDGYRKLNPMVYCGLYPIDSSKYNDLRDALEKLELNDSALQFEAETSQALGFGFRCGFLGLLHMEIIQERIEREFNIDLITTAPSVIYHVNLTDGSNIVVDNPADMPEPGVIESVEEPYVKATVMVPNDYVGAVMELAQNKRGNFITMEYLDDIRVSIVYEIPLSEIVYDFFDQLKSSTKGYASFDYELIGYKASKLVKMDILLNAEKVDALSFIVHRDFAYERGKIIVEKLKELIPRQQFEVPIQAAIATKIVSRSTIKALRKNVLAKCYGGDVSRKRKLLEKQKEGKKRMKQIGSVEVPQEAFMAILKMDESK.

One can recognise a tr-type G domain in the interval Lys11–Ser193. Residues Asp23 to Thr28 and Asn140 to Asp143 contribute to the GTP site.

Belongs to the TRAFAC class translation factor GTPase superfamily. Classic translation factor GTPase family. LepA subfamily.

The protein localises to the cell membrane. It catalyses the reaction GTP + H2O = GDP + phosphate + H(+). Functionally, required for accurate and efficient protein synthesis under certain stress conditions. May act as a fidelity factor of the translation reaction, by catalyzing a one-codon backward translocation of tRNAs on improperly translocated ribosomes. Back-translocation proceeds from a post-translocation (POST) complex to a pre-translocation (PRE) complex, thus giving elongation factor G a second chance to translocate the tRNAs correctly. Binds to ribosomes in a GTP-dependent manner. In Listeria innocua serovar 6a (strain ATCC BAA-680 / CLIP 11262), this protein is Elongation factor 4.